We begin with the raw amino-acid sequence, 193 residues long: DNA damage-inducible transcript 4-like protein (193 aa).

The protein belongs to the DDIT4 family.

It localises to the cytoplasm. Its function is as follows. Inhibits cell growth by regulating the TOR signaling pathway upstream of the TSC1-TSC2 complex and downstream of AKT1. This chain is DNA damage-inducible transcript 4-like protein (DDIT4L), found in Bos taurus (Bovine).